A 1062-amino-acid chain; its full sequence is Platelet-derived growth factor receptor alpha (1062 aa).

An N-terminal signal peptide occupies residues 1–27; it reads MFPPSSAPLLLPQLEELVVPLHTAFTL. Ig-like C2-type domains lie at 28 to 96, 91 to 184, 190 to 281, 287 to 381, and 389 to 493; these read TCQG…VYVP, IYVY…VHGW, LHVE…KQIA, SEFM…RTVS, and PAVI…IKLV. Residues 28-504 are Extracellular-facing; sequence TCQGEATIAW…NGPHPELTVA (477 aa). The cysteines at positions 29 and 74 are disulfide-linked. Residues Asn-79 and Asn-132 are each glycosylated (N-linked (GlcNAc...) asparagine). 2 disulfide bridges follow: Cys-124–Cys-165 and Cys-211–Cys-265. N-linked (GlcNAc...) asparagine glycans are attached at residues Asn-273, Asn-333, Asn-366, Asn-433, and Asn-444. A disulfide bridge links Cys-410 with Cys-477. A helical transmembrane segment spans residues 505–525; sequence AAVLVLLVIVIISLIVLVVIW. Topologically, residues 526 to 1062 are cytoplasmic; the sequence is KQKPRYEIRW…CSDLVEDSFL (537 aa). Phosphotyrosine; by autocatalysis is present on residues Tyr-548 and Tyr-550. The region spanning 569-945 is the Protein kinase domain; that stretch reads LVLGRILGSG…HYERVNHEFL (377 aa). ATP-binding positions include 575–583 and Lys-603; that span reads LGSGAFGKV. Residues Tyr-697, Tyr-708, Tyr-719, Tyr-731, and Tyr-739 each carry the phosphotyrosine; by autocatalysis modification. The disordered stretch occupies residues 734 to 754; that stretch reads LQGSNYDHPPSQKGSNDGEMD. Asp-793 acts as the Proton acceptor in catalysis. Phosphotyrosine; by autocatalysis is present on residues Tyr-824 and Tyr-963. The span at 975–986 shows a compositional bias: basic and acidic residues; the sequence is KDRESGFDEQRL. The interval 975 to 1034 is disordered; it reads KDRESGFDEQRLSSDSGYIIPLPDLDPISDEEYGKRNRHSSQTSEESAIETGSSSSTFAK. Residue Tyr-992 is modified to Phosphotyrosine; by autocatalysis. Over residues 1014 to 1032 the composition is skewed to polar residues; that stretch reads SSQTSEESAIETGSSSSTF.

It belongs to the protein kinase superfamily. Tyr protein kinase family. CSF-1/PDGF receptor subfamily. In terms of assembly, interacts with homodimeric pdgfa, pdgfb and pdgfc, and with heterodimers formed by pdgfa and pdgfb. monomer in the absence of bound ligand. Interaction with dimeric pdgfa, pdgfb and/or pdgfc leads to receptor dimerization, where both pdgfra homodimers and heterodimers with pdgfrb are observed. Post-translationally, ubiquitinated, leading to its degradation. Autophosphorylated on tyrosine residues upon ligand binding. Autophosphorylation occurs in trans, i.e. one subunit of the dimeric receptor phosphorylates tyrosine residues on the other subunit.

It is found in the cell membrane. The catalysed reaction is L-tyrosyl-[protein] + ATP = O-phospho-L-tyrosyl-[protein] + ADP + H(+). Its activity is regulated as follows. Present in an inactive conformation in the absence of bound ligand. Binding of pdgfa and/or pdgfb leads to dimerization and activation by autophosphorylation on tyrosine residues. In terms of biological role, tyrosine-protein kinase that acts as a cell-surface receptor for pdgfa, pdgfb and pdgfc and plays an essential role in the regulation of embryonic development, cell proliferation, survival and chemotaxis. Depending on the context, promotes or inhibits cell proliferation and cell migration. Plays an important role in the differentiation of bone marrow-derived mesenchymal stem cells. Required for normal skeleton development. Required for normal development of the gastrointestinal tract. Plays a role in cell migration and chemotaxis in wound healing. Plays a role in platelet activation, secretion of agonists from platelet granules, and in thrombin-induced platelet aggregation. Binding of its cognate ligands - homodimeric pdgfa, homodimeric pdgfb, heterodimers formed by pdgfa and pdgfb or homodimeric pdgfc -leads to the activation of several signaling cascades; the response depends on the nature of the bound ligand and is modulated by the formation of heterodimers between pdgfra and pdgfrb. Phosphorylates pik3r1, plcg1, and ptpn11. Activation of plcg1 leads to the production of the cellular signaling molecules diacylglycerol and inositol 1,4,5-trisphosphate, mobilization of cytosolic Ca(2+) and the activation of protein kinase C. Phosphorylates pik3r1, the regulatory subunit of phosphatidylinositol 3-kinase, and thereby mediates activation of the AKT1 signaling pathway. Mediates activation of hras and of the MAP kinases mapk1/erk2 and/or mapk3/erk1. Promotes activation of STAT family members stat1, stat3 and stat5a and/or stat5b. Receptor signaling is down-regulated by protein phosphatases that dephosphorylate the receptor and its down-stream effectors, and by rapid internalization of the activated receptor. The protein is Platelet-derived growth factor receptor alpha (pdgfra) of Takifugu rubripes (Japanese pufferfish).